The chain runs to 799 residues: ATP-dependent DNA helicase Hel308 (799 aa).

Residues Q29 and 47-54 (IPTASGKT) contribute to the ATP site. One can recognise a Helicase ATP-binding domain in the interval 34–200 (EAGVTEGENL…WLDAGLVDSD (167 aa)). The DEAH box signature appears at 145–148 (DEVH). In terms of domain architecture, Helicase C-terminal spans 234-435 (QTAAIVRDTL…EPALRTHILA (202 aa)). Disordered regions lie at residues 522 to 566 (RGAS…DRDP) and 750 to 799 (NVLE…LGDF). Residues 553 to 566 (LAEDADESDADRDP) are compositionally biased toward acidic residues.

This sequence belongs to the helicase family. Hel308 subfamily. As to quaternary structure, monomer.

It catalyses the reaction Couples ATP hydrolysis with the unwinding of duplex DNA by translocating in the 3'-5' direction.. The catalysed reaction is ATP + H2O = ADP + phosphate + H(+). Functionally, DNA-dependent ATPase and 3'-5' DNA helicase that may be involved in repair of stalled replication forks. In Haloarcula marismortui (strain ATCC 43049 / DSM 3752 / JCM 8966 / VKM B-1809) (Halobacterium marismortui), this protein is ATP-dependent DNA helicase Hel308.